Reading from the N-terminus, the 410-residue chain is D-3-phosphoglycerate dehydrogenase (410 aa).

Residues 161 to 162 (HI), aspartate 181, 238 to 240 (ASR), and aspartate 264 contribute to the NAD(+) site. Arginine 240 is a catalytic residue. Residue glutamate 269 is part of the active site. Residue histidine 292 is the Proton donor of the active site. 292-295 (HIGG) lines the NAD(+) pocket. Residues 339–410 (RLMHIHENRP…PGTIRARLLY (72 aa)) form the ACT domain.

This sequence belongs to the D-isomer specific 2-hydroxyacid dehydrogenase family. In terms of assembly, homotetramer.

The enzyme catalyses (2R)-3-phosphoglycerate + NAD(+) = 3-phosphooxypyruvate + NADH + H(+). The catalysed reaction is (R)-2-hydroxyglutarate + NAD(+) = 2-oxoglutarate + NADH + H(+). The protein operates within amino-acid biosynthesis; L-serine biosynthesis; L-serine from 3-phospho-D-glycerate: step 1/3. With respect to regulation, in bacteria displays feedback inhibition by L-serine. Catalyzes the reversible oxidation of 3-phospho-D-glycerate to 3-phosphonooxypyruvate, the first step of the phosphorylated L-serine biosynthesis pathway. Also catalyzes the reversible oxidation of 2-hydroxyglutarate to 2-oxoglutarate. In Escherichia coli O6:H1 (strain CFT073 / ATCC 700928 / UPEC), this protein is D-3-phosphoglycerate dehydrogenase (serA).